The following is a 359-amino-acid chain: Gene 58 protein (359 aa).

11 helical membrane passes run 12 to 32 (TMAA…CFLF), 45 to 65 (VDEL…FFCF), 75 to 95 (YLDL…ICLQ), 103 to 123 (YLPI…PVTF), 132 to 152 (YANA…YLLL), 154 to 174 (FGSV…IAGL), 220 to 240 (LCVV…AGVY), 246 to 266 (VLKT…GMGY), 271 to 289 (ATFV…VFVL), 296 to 318 (SVLF…TIML), and 330 to 350 (IVLS…NVLY).

Belongs to the herpesviridae BMRF2 family.

The protein localises to the host membrane. In Equine herpesvirus 2 (strain 86/87) (EHV-2), this protein is Gene 58 protein (58).